Reading from the N-terminus, the 429-residue chain is MNQPSDLSHTSMSRVEAMHSWSAPNVPALPGRGPQLRLYDSADRQVRPVAPGATATMYVCGITPYDATHLGHAATYLTFDLVHRLWRDSGHDVHYVQNITDVDDPLFERAQRDGIGWRELGDRETELFREDMAALRVLPPRDYVAATEAIAEVVELVEKMLAAGAAYVVDDPQYPDVYFRADATVQFGYESGYDRDTMLALFAERGGDPDRPGKSDPLDALLWLAERPGEPSWPSPFGPGRPGWHVECAAIALSRIGTGLDIQGGGSDLIFPHHEFSAAHAECVTGERRFARHYVHAGMIGWDGHKMSKSRGNLVLVSQLRRDGVDPAAIRLGLFAGHYRDDRFWSPAVLDEALARLHRWRSATALAGAPDATDVVARVRRYLADDLDTPKALAALDGWATDALTYGGHDATAGTTVATAVDALLGIAL.

Cys60 provides a ligand contact to Zn(2+). L-cysteinyl-5'-AMP-binding positions include Cys60–Thr63, Thr75, and Asn98–Thr100. Residues Ile62 to His72 carry the 'HIGH' region motif. The 'ERGGDP' region signature appears at Glu204 to Pro209. An L-cysteinyl-5'-AMP-binding site is contributed by Trp244. Cys248 provides a ligand contact to Zn(2+). Residue Gly266–Asp268 participates in L-cysteinyl-5'-AMP binding. Residue His273 coordinates Zn(2+). Ile300 contacts L-cysteinyl-5'-AMP. Residues Lys306–Ser310 carry the 'KMSKS' region motif.

The protein belongs to the class-I aminoacyl-tRNA synthetase family. MshC subfamily. In terms of assembly, monomer. Zn(2+) serves as cofactor.

The enzyme catalyses 1D-myo-inositol 2-amino-2-deoxy-alpha-D-glucopyranoside + L-cysteine + ATP = 1D-myo-inositol 2-(L-cysteinylamino)-2-deoxy-alpha-D-glucopyranoside + AMP + diphosphate + H(+). Catalyzes the ATP-dependent condensation of GlcN-Ins and L-cysteine to form L-Cys-GlcN-Ins. In Mycolicibacterium vanbaalenii (strain DSM 7251 / JCM 13017 / BCRC 16820 / KCTC 9966 / NRRL B-24157 / PYR-1) (Mycobacterium vanbaalenii), this protein is L-cysteine:1D-myo-inositol 2-amino-2-deoxy-alpha-D-glucopyranoside ligase.